The chain runs to 328 residues: MNSPQNVSTKKVTVTGAAGQISYSLLWRIANGEVFGTETPVELKLLEIPQALGGAEGVAMELLDSAFPLLRNITITADANEAFDGANAAFLVGAKPRGKGEERADLLANNGKIFGPQGKAINDNAADDIRVLVVGNPANTNALIASAAAPDVPASRFNAMMRLDHNRAISQLATKLGRGSAEFNNIVVWGNHSATQFPDITYATVGGEKVTDLVDHDWYVEEFIPRVANRGAEIIEVRGKSSAASAASSAIDHMRDWVQGTEAWSSAAIPSTGAYGIPEGIFVGLPTVSRNGEWEIVEGLEISDFQRARIDANAQELQAEREAVRDLL.

NAD(+) is bound at residue 16-22 (GAAGQIS). 2 residues coordinate substrate: Arg97 and Arg103. NAD(+)-binding positions include Asn110, Gln117, and 134–136 (VGN). 2 residues coordinate substrate: Asn136 and Arg167. Catalysis depends on His192, which acts as the Proton acceptor.

The protein belongs to the LDH/MDH superfamily. MDH type 2 family.

It carries out the reaction (S)-malate + NAD(+) = oxaloacetate + NADH + H(+). In terms of biological role, catalyzes the reversible oxidation of malate to oxaloacetate. This is Malate dehydrogenase from Corynebacterium glutamicum (strain R).